The primary structure comprises 661 residues: UvrABC system protein B (661 aa).

One can recognise a Helicase ATP-binding domain in the interval 26 to 413 (KGIQEGKKHQ…TDEMVEQIIR (388 aa)). 39-46 (GATGTGKT) lines the ATP pocket. Positions 92–115 (YYDYYQPEAYVPQTDTFIEKDASI) match the Beta-hairpin motif. Positions 430 to 596 (QIDDLIGEIQ…TINKEIRDVI (167 aa)) constitute a Helicase C-terminal domain. Residues 625-660 (QKVVEQMEHEMKEAAKALDFERAAELRDLLLELKAE) form the UVR domain.

This sequence belongs to the UvrB family. In terms of assembly, forms a heterotetramer with UvrA during the search for lesions. Interacts with UvrC in an incision complex.

It localises to the cytoplasm. In terms of biological role, the UvrABC repair system catalyzes the recognition and processing of DNA lesions. A damage recognition complex composed of 2 UvrA and 2 UvrB subunits scans DNA for abnormalities. Upon binding of the UvrA(2)B(2) complex to a putative damaged site, the DNA wraps around one UvrB monomer. DNA wrap is dependent on ATP binding by UvrB and probably causes local melting of the DNA helix, facilitating insertion of UvrB beta-hairpin between the DNA strands. Then UvrB probes one DNA strand for the presence of a lesion. If a lesion is found the UvrA subunits dissociate and the UvrB-DNA preincision complex is formed. This complex is subsequently bound by UvrC and the second UvrB is released. If no lesion is found, the DNA wraps around the other UvrB subunit that will check the other stand for damage. This is UvrABC system protein B from Bacillus subtilis (strain 168).